The chain runs to 302 residues: Phosphoribosylaminoimidazole-succinocarboxamide synthase (302 aa).

This sequence belongs to the SAICAR synthetase family.

The catalysed reaction is 5-amino-1-(5-phospho-D-ribosyl)imidazole-4-carboxylate + L-aspartate + ATP = (2S)-2-[5-amino-1-(5-phospho-beta-D-ribosyl)imidazole-4-carboxamido]succinate + ADP + phosphate + 2 H(+). It functions in the pathway purine metabolism; IMP biosynthesis via de novo pathway; 5-amino-1-(5-phospho-D-ribosyl)imidazole-4-carboxamide from 5-amino-1-(5-phospho-D-ribosyl)imidazole-4-carboxylate: step 1/2. In Leptothrix cholodnii (strain ATCC 51168 / LMG 8142 / SP-6) (Leptothrix discophora (strain SP-6)), this protein is Phosphoribosylaminoimidazole-succinocarboxamide synthase.